We begin with the raw amino-acid sequence, 118 residues long: Large ribosomal subunit protein bL20c (118 aa).

It belongs to the bacterial ribosomal protein bL20 family.

It localises to the plastid. Functionally, binds directly to 23S ribosomal RNA and is necessary for the in vitro assembly process of the 50S ribosomal subunit. It is not involved in the protein synthesizing functions of that subunit. This chain is Large ribosomal subunit protein bL20c (rpl20), found in Cuscuta reflexa (Southern Asian dodder).